We begin with the raw amino-acid sequence, 227 residues long: Testis expressed protein 56 (227 aa).

Expressed predominantly in the testis.

The polypeptide is Testis expressed protein 56 (Mus musculus (Mouse)).